We begin with the raw amino-acid sequence, 83 residues long: Exodeoxyribonuclease 7 small subunit (83 aa).

The protein belongs to the XseB family. In terms of assembly, heterooligomer composed of large and small subunits.

The protein resides in the cytoplasm. The catalysed reaction is Exonucleolytic cleavage in either 5'- to 3'- or 3'- to 5'-direction to yield nucleoside 5'-phosphates.. Its function is as follows. Bidirectionally degrades single-stranded DNA into large acid-insoluble oligonucleotides, which are then degraded further into small acid-soluble oligonucleotides. This is Exodeoxyribonuclease 7 small subunit from Rhodopseudomonas palustris (strain ATCC BAA-98 / CGA009).